Here is a 722-residue protein sequence, read N- to C-terminus: Probable carboxypeptidase X1 (722 aa).

Residues 1–20 (MWGLLLAVTAFAPSVGLGLG) form the signal peptide. Positions 30–54 (APGSTLAPHSSVAQPSTKANETSER) are disordered. The span at 36–49 (APHSSVAQPSTKAN) shows a compositional bias: polar residues. Asn-49, Asn-200, Asn-210, and Asn-307 each carry an N-linked (GlcNAc...) asparagine glycan. Positions 103-263 (PGCPPLGLES…PCLRAEILAC (161 aa)) constitute an F5/8 type C domain. Cys-105 and Cys-263 are disulfide-bonded. The Peptidase M14 domain maps to 287–610 (RHHNYKAMRK…DALLTYLEQV (324 aa)). The Zn(2+) site is built by His-349 and Glu-352. Asn-461 carries an N-linked (GlcNAc...) asparagine glycan. His-487 provides a ligand contact to Zn(2+). Catalysis depends on Glu-580, which acts as the Proton donor/acceptor.

Belongs to the peptidase M14 family. Zn(2+) serves as cofactor. Strongly expressed in testis and spleen. Moderately expressed in salivary gland, brain, heart, lung, and kidney. Extremely low expression in liver and muscle. No expression in eye, adrenal, and white adipose tissues.

The protein localises to the secreted. Its function is as follows. May be involved in cell-cell interactions. No carboxypeptidase activity was found yet. The polypeptide is Probable carboxypeptidase X1 (Cpxm1) (Mus musculus (Mouse)).